Consider the following 234-residue polypeptide: Probable transcriptional regulatory protein Pfl01_3677 (234 aa).

It belongs to the TACO1 family.

The protein localises to the cytoplasm. The chain is Probable transcriptional regulatory protein Pfl01_3677 from Pseudomonas fluorescens (strain Pf0-1).